A 70-amino-acid polypeptide reads, in one-letter code: uncharacterized protein (70 aa).

Its subcellular location is the plastid. It localises to the chloroplast. This is an uncharacterized protein from Mesostigma viride (Green alga).